Here is a 154-residue protein sequence, read N- to C-terminus: Ribonuclease H (154 aa).

The 142-residue stretch at 1-142 (MLKKIDLYTD…CDELAREAAS (142 aa)) folds into the RNase H type-1 domain. Mg(2+) contacts are provided by Asp-10, Glu-48, Asp-70, and Asp-134. Positions 133–154 (CDELAREAASGKQLAEDTGYQP) are disordered.

The protein belongs to the RNase H family. Monomer. Mg(2+) is required as a cofactor.

The protein resides in the cytoplasm. It carries out the reaction Endonucleolytic cleavage to 5'-phosphomonoester.. Functionally, endonuclease that specifically degrades the RNA of RNA-DNA hybrids. This Aeromonas hydrophila subsp. hydrophila (strain ATCC 7966 / DSM 30187 / BCRC 13018 / CCUG 14551 / JCM 1027 / KCTC 2358 / NCIMB 9240 / NCTC 8049) protein is Ribonuclease H.